A 366-amino-acid chain; its full sequence is DNA replication and repair protein RecF (366 aa).

30-37 (GRNAQGKT) is an ATP binding site.

The protein belongs to the RecF family.

It localises to the cytoplasm. In terms of biological role, the RecF protein is involved in DNA metabolism; it is required for DNA replication and normal SOS inducibility. RecF binds preferentially to single-stranded, linear DNA. It also seems to bind ATP. This chain is DNA replication and repair protein RecF, found in Streptococcus thermophilus (strain ATCC BAA-250 / LMG 18311).